The following is a 335-amino-acid chain: DNA primase small subunit PriS (335 aa).

Active-site residues include Asp-96, Asp-98, and Asp-243.

Belongs to the eukaryotic-type primase small subunit family. As to quaternary structure, heterodimer of a small subunit (PriS) and a large subunit (PriL). Requires Mg(2+) as cofactor. Mn(2+) is required as a cofactor.

In terms of biological role, catalytic subunit of DNA primase, an RNA polymerase that catalyzes the synthesis of short RNA molecules used as primers for DNA polymerase during DNA replication. The small subunit contains the primase catalytic core and has DNA synthesis activity on its own. Binding to the large subunit stabilizes and modulates the activity, increasing the rate of DNA synthesis while decreasing the length of the DNA fragments, and conferring RNA synthesis capability. The DNA polymerase activity may enable DNA primase to also catalyze primer extension after primer synthesis. May also play a role in DNA repair. The sequence is that of DNA primase small subunit PriS from Archaeoglobus fulgidus (strain ATCC 49558 / DSM 4304 / JCM 9628 / NBRC 100126 / VC-16).